Reading from the N-terminus, the 282-residue chain is 2-dehydro-3-deoxyphosphooctonate aldolase (282 aa).

Belongs to the KdsA family.

Its subcellular location is the cytoplasm. It carries out the reaction D-arabinose 5-phosphate + phosphoenolpyruvate + H2O = 3-deoxy-alpha-D-manno-2-octulosonate-8-phosphate + phosphate. It participates in carbohydrate biosynthesis; 3-deoxy-D-manno-octulosonate biosynthesis; 3-deoxy-D-manno-octulosonate from D-ribulose 5-phosphate: step 2/3. The protein operates within bacterial outer membrane biogenesis; lipopolysaccharide biosynthesis. This Shewanella amazonensis (strain ATCC BAA-1098 / SB2B) protein is 2-dehydro-3-deoxyphosphooctonate aldolase.